The primary structure comprises 136 residues: Nucleoside diphosphate kinase (136 aa).

Positions 10, 58, 86, 92, 104, and 114 each coordinate ATP. The active-site Pros-phosphohistidine intermediate is the His117.

The protein belongs to the NDK family. Homotetramer. The cofactor is Mg(2+).

It is found in the cytoplasm. The enzyme catalyses a 2'-deoxyribonucleoside 5'-diphosphate + ATP = a 2'-deoxyribonucleoside 5'-triphosphate + ADP. It catalyses the reaction a ribonucleoside 5'-diphosphate + ATP = a ribonucleoside 5'-triphosphate + ADP. Major role in the synthesis of nucleoside triphosphates other than ATP. The ATP gamma phosphate is transferred to the NDP beta phosphate via a ping-pong mechanism, using a phosphorylated active-site intermediate. This chain is Nucleoside diphosphate kinase, found in Corynebacterium diphtheriae (strain ATCC 700971 / NCTC 13129 / Biotype gravis).